A 775-amino-acid chain; its full sequence is MQQEAERCRVRTKRPDMALYVPKARRGTALLKSSDQEEGHGPPAFVPKDQKEGCLPQKISASKPESQRRGAGHSDRKDVDCREGKRSASQLRKDRCPQKQNKEKACSKKGAEESTEASSQEHQHRAPDAGIVSSIPLQRLFKPKDMDCWEVQTAGATGHWRVSPSQSSSEVSAAQVPSRPFQNVELCDFSGETFVNRNLESSIVTEAKVPELVSQFPQVVTTLLKPDGMAMPVTLSSDSETAPSSLETPDGMSKHSPGDISVVSVPGGPDEDVDSTFVDFEVESEGTVNSTESVLGQKGVDSILETVDNVSLKMAVVSKLESTNGTIDPAVTRECESDSSADELCVKSEPSDTAVLVHEIDTDDGFRNVCDSTSKACMVDIAGTACDPVTEGSSCTGAVGESGESSGNMRNFSDYIEMSADVAPLDRAKSENDSENISSLSACSDIYAESIASGFTESTGKLIESVSDGASSLPIKKTADSNIATCLDSELSMSDASDVLLESALGSDLDTTEEMTEALHDLKTAEEFKTKEEDYSESVVCGISFSDSSVETSVDLKTTDTSHIQGSSAVEESWESMFNDDGDCVDPRLLLELSGNVKNRKSIQEPRFDYYSHELPDIDLSECEFPHVIEIYDFPQEFRTEDLLRIFCSYQKKGFDIKWVDDTHALGVFASPITARDALGTKHTMVKIRPLSQATRAAKAKARACAEFLQPAKERPETSAALARRLVISALGVRSKQSKTEREAELRKLQEARERKRLEAKQREDIWEGRDQSVV.

2 stretches are compositionally biased toward basic and acidic residues: residues 1–16 (MQQE…KRPD) and 65–112 (ESQR…KGAE). Disordered stretches follow at residues 1–127 (MQQE…HRAP) and 235–262 (LSSD…DISV). The EJC-binding motif; may mediate interaction with the EJC stretch occupies residues 7–27 (RCRVRTKRPDMALYVPKARRG). Residues 235–247 (LSSDSETAPSSLE) are compositionally biased toward polar residues. Ser671 is subject to Phosphoserine. Residue Thr695 is modified to Phosphothreonine. Residues 734–766 (RSKQSKTEREAELRKLQEARERKRLEAKQREDI) adopt a coiled-coil conformation. The interval 755–775 (RKRLEAKQREDIWEGRDQSVV) is disordered.

As to quaternary structure, may interact with the exon junction complex (EJC) composed at least of CASC3, EIF4A3, MAGOH and RBM8A.

This chain is Coiled-coil domain-containing protein R3HCC1L (R3hcc1l), found in Mus musculus (Mouse).